Reading from the N-terminus, the 879-residue chain is Beta-mannosidase (879 aa).

Residues 1 to 17 (MLLRLLLLLAPCGAGFA) form the signal peptide. N-linked (GlcNAc...) asparagine glycosylation is found at Asn-35 and Asn-77. An intrachain disulfide couples Cys-167 to Cys-176. 190-192 (WDW) contributes to the substrate binding site. Asn-297 and Asn-302 each carry an N-linked (GlcNAc...) asparagine glycan. Residue Asn-456 participates in substrate binding. Residue Glu-457 is the Proton donor of the active site. 3 disulfide bridges follow: Cys-540–Cys-629, Cys-732–Cys-761, and Cys-764–Cys-769. Catalysis depends on Glu-554, which acts as the Nucleophile. N-linked (GlcNAc...) asparagine glycosylation occurs at Asn-607. N-linked (GlcNAc...) asparagine glycosylation is present at Asn-803.

Belongs to the glycosyl hydrolase 2 family. In terms of assembly, monomer. The N-terminus is blocked. In terms of processing, N-glycosylated. As to expression, detected in kidney (at protein level). Highest expression is found in thyroid tissue. The amount of transcript is significantly higher in normal tissues than in tissues affected by the disease.

Its subcellular location is the lysosome. It catalyses the reaction Hydrolysis of terminal, non-reducing beta-D-mannose residues in beta-D-mannosides.. It functions in the pathway glycan metabolism; N-glycan degradation. Exoglycosidase that cleaves the single beta-linked mannose residue from the non-reducing end of all N-linked glycoprotein oligosaccharides. This chain is Beta-mannosidase (MANBA), found in Bos taurus (Bovine).